A 195-amino-acid chain; its full sequence is ATP-dependent Clp protease proteolytic subunit 2 (195 aa).

The Nucleophile role is filled by S98. Residue H123 is part of the active site.

The protein belongs to the peptidase S14 family. As to quaternary structure, fourteen ClpP subunits assemble into 2 heptameric rings which stack back to back to give a disk-like structure with a central cavity, resembling the structure of eukaryotic proteasomes.

The protein resides in the cytoplasm. The enzyme catalyses Hydrolysis of proteins to small peptides in the presence of ATP and magnesium. alpha-casein is the usual test substrate. In the absence of ATP, only oligopeptides shorter than five residues are hydrolyzed (such as succinyl-Leu-Tyr-|-NHMec, and Leu-Tyr-Leu-|-Tyr-Trp, in which cleavage of the -Tyr-|-Leu- and -Tyr-|-Trp bonds also occurs).. Functionally, cleaves peptides in various proteins in a process that requires ATP hydrolysis. Has a chymotrypsin-like activity. Plays a major role in the degradation of misfolded proteins. The polypeptide is ATP-dependent Clp protease proteolytic subunit 2 (Rhodopirellula baltica (strain DSM 10527 / NCIMB 13988 / SH1)).